Reading from the N-terminus, the 330-residue chain is Carbonic anhydrase (330 aa).

A chloroplast transit peptide-like region spans residues 1–109; that stretch reads MSTASAFATN…AAARIDQITA (109 aa).

It belongs to the beta-class carbonic anhydrase family.

It is found in the cytoplasm. The enzyme catalyses hydrogencarbonate + H(+) = CO2 + H2O. Functionally, reversible hydration of carbon dioxide. In Flaveria brownii (Brown's yellowtops), this protein is Carbonic anhydrase.